The sequence spans 126 residues: 13 kDa ribonucleoprotein-associated protein (126 aa).

Belongs to the eukaryotic ribosomal protein eL8 family. Component of the U3 snoRNP particle. Binds to the C'/D and B/C motifs in U3 snoRNA. Component of the 25S U4/U6.U5 tri-snRNP particle, a subcomplex of the spliceosome. Binds to the 5' stem-loop of U4 snRNA.

Its subcellular location is the nucleus. It localises to the nucleolus. In terms of biological role, common component of the spliceosome and rRNA processing machinery. In association with the spliceosomal U4/U6.U5 tri-snRNP particle, required for splicing of pre-mRNA. In association with box C/D snoRNPs, required for processing of pre-ribosomal RNA (rRNA) and site-specific 2'-O-methylation of substrate RNAs. Essential for the accumulation and stability of U4 snRNA, U6 snRNA, and box C/D snoRNAs. The protein is 13 kDa ribonucleoprotein-associated protein (SNU13) of Candida glabrata (strain ATCC 2001 / BCRC 20586 / JCM 3761 / NBRC 0622 / NRRL Y-65 / CBS 138) (Yeast).